We begin with the raw amino-acid sequence, 157 residues long: Protein-export protein SecB (157 aa).

Belongs to the SecB family. As to quaternary structure, homotetramer, a dimer of dimers. One homotetramer interacts with 1 SecA dimer.

Its subcellular location is the cytoplasm. Functionally, one of the proteins required for the normal export of preproteins out of the cell cytoplasm. It is a molecular chaperone that binds to a subset of precursor proteins, maintaining them in a translocation-competent state. It also specifically binds to its receptor SecA. This chain is Protein-export protein SecB, found in Dichelobacter nodosus (strain VCS1703A).